A 794-amino-acid chain; its full sequence is Phosphoribosylformylglycinamidine synthase subunit PurL (794 aa).

Residue H47 is part of the active site. ATP-binding residues include Y50 and K89. E91 contacts Mg(2+). Substrate is bound by residues 92 to 95 and R114; that span reads SHNH. The Proton acceptor role is filled by H93. D115 contributes to the Mg(2+) binding site. Q238 contacts substrate. Mg(2+) is bound at residue D266. 310 to 312 contacts substrate; sequence ESQ. ATP-binding residues include D522 and G559. N560 contacts Mg(2+). S562 is a binding site for substrate.

Belongs to the FGAMS family. Monomer. Part of the FGAM synthase complex composed of 1 PurL, 1 PurQ and 2 PurS subunits.

The protein resides in the cytoplasm. It carries out the reaction N(2)-formyl-N(1)-(5-phospho-beta-D-ribosyl)glycinamide + L-glutamine + ATP + H2O = 2-formamido-N(1)-(5-O-phospho-beta-D-ribosyl)acetamidine + L-glutamate + ADP + phosphate + H(+). It functions in the pathway purine metabolism; IMP biosynthesis via de novo pathway; 5-amino-1-(5-phospho-D-ribosyl)imidazole from N(2)-formyl-N(1)-(5-phospho-D-ribosyl)glycinamide: step 1/2. Functionally, part of the phosphoribosylformylglycinamidine synthase complex involved in the purines biosynthetic pathway. Catalyzes the ATP-dependent conversion of formylglycinamide ribonucleotide (FGAR) and glutamine to yield formylglycinamidine ribonucleotide (FGAM) and glutamate. The FGAM synthase complex is composed of three subunits. PurQ produces an ammonia molecule by converting glutamine to glutamate. PurL transfers the ammonia molecule to FGAR to form FGAM in an ATP-dependent manner. PurS interacts with PurQ and PurL and is thought to assist in the transfer of the ammonia molecule from PurQ to PurL. The chain is Phosphoribosylformylglycinamidine synthase subunit PurL from Prochlorococcus marinus (strain MIT 9303).